The primary structure comprises 83 residues: Small ribosomal subunit protein bS20 (83 aa).

The interval 1-21 (MPNIKSAIKRVRTTETAEERN) is disordered. Residues 12–21 (RTTETAEERN) show a composition bias toward basic and acidic residues.

The protein belongs to the bacterial ribosomal protein bS20 family.

Functionally, binds directly to 16S ribosomal RNA. The sequence is that of Small ribosomal subunit protein bS20 from Staphylococcus epidermidis (strain ATCC 35984 / DSM 28319 / BCRC 17069 / CCUG 31568 / BM 3577 / RP62A).